Consider the following 283-residue polypeptide: uncharacterized protein (283 aa).

The tract at residues Met-1–Ser-21 is disordered. The helical transmembrane segment at Ser-41–Leu-61 threads the bilayer.

Belongs to the APS1/VSP family.

It is found in the membrane. This is an uncharacterized protein from Arabidopsis thaliana (Mouse-ear cress).